We begin with the raw amino-acid sequence, 587 residues long: Barrierpepsin (587 aa).

Positions 1-24 are cleaved as a signal peptide; sequence MSAINHLCLKLILASFAIINTITA. The Peptidase A1 domain occupies 45–393; that stretch reads YATTLDIGTP…DLDNYKISLA (349 aa). The active site involves Asp-63. N-linked (GlcNAc...) asparagine glycans are attached at residues Asn-84, Asn-90, and Asn-268. Asp-287 is a catalytic residue. The N-linked (GlcNAc...) asparagine glycan is linked to Asn-308. Cys-322 and Cys-358 form a disulfide bridge. 5 N-linked (GlcNAc...) asparagine glycosylation sites follow: Asn-366, Asn-398, Asn-468, Asn-503, and Asn-551. The interval 466 to 505 is disordered; sequence SRNCSTKMPGTRSTTVLSKPTQNSAMHQSTGAVTQTSNET.

This sequence belongs to the peptidase A1 family.

Its subcellular location is the secreted. The catalysed reaction is Selective cleavage of 6-Leu-|-Lys-7 bond in the pheromone alpha-mating factor.. Its function is as follows. This protein called 'barrier activity' is excreted by yeast cells mating type a. It is probably a protease that cleaves alpha-factor and thus acts as an antagonist of this mating pheromone and establishes optimal pheromone concentration for conjugation. This Saccharomyces cerevisiae (strain ATCC 204508 / S288c) (Baker's yeast) protein is Barrierpepsin (BAR1).